A 281-amino-acid chain; its full sequence is Auxin-responsive protein IAA10 (281 aa).

Disordered stretches follow at residues 1–115 and 130–157; these read MRGG…VVGW and AKEN…EEGE. The segment covering 7-17 has biased composition (low complexity); it reads GPTAGEPPGTE. The segment covering 18-35 has biased composition (acidic residues); that stretch reads AEAEEVEESSAGDDEELE. The short motif at 36-40 is the EAR-like (transcriptional repression) element; that stretch reads LGLSL. 2 stretches are compositionally biased toward low complexity: residues 36 to 49 and 63 to 84; these read LGLS…QQQQ and PAAA…AAAA. A compositionally biased stretch (basic and acidic residues) spans 133–157; the sequence is NTSETDTKKTATNESDVQKDKEEGE. Positions 163–259 constitute a PB1 domain; the sequence is AGWVKVNMDG…KRLRIMRTSD (97 aa).

It belongs to the Aux/IAA family. As to quaternary structure, homodimers and heterodimers. Highly expressed in flowers. Expressed in shoots.

The protein localises to the nucleus. Functionally, aux/IAA proteins are short-lived transcriptional factors that function as repressors of early auxin response genes at low auxin concentrations. The sequence is that of Auxin-responsive protein IAA10 (IAA10) from Oryza sativa subsp. indica (Rice).